Here is a 357-residue protein sequence, read N- to C-terminus: D-alanine--D-alanine ligase (357 aa).

Residues 134-339 form the ATP-grasp domain; that stretch reads KQLFEHRGLP…YPDLIAKLID (206 aa). 167–222 lines the ATP pocket; the sequence is NDKLTYPVFVKPANLGSSVGISKCNNEEELKSGIAEAFQFDRKLVIEQGINAREIE. Residues Asp-293, Glu-306, and Asn-308 each coordinate Mg(2+).

This sequence belongs to the D-alanine--D-alanine ligase family. Mg(2+) is required as a cofactor. The cofactor is Mn(2+).

The protein resides in the cytoplasm. It catalyses the reaction 2 D-alanine + ATP = D-alanyl-D-alanine + ADP + phosphate + H(+). Its pathway is cell wall biogenesis; peptidoglycan biosynthesis. In terms of biological role, cell wall formation. This chain is D-alanine--D-alanine ligase, found in Staphylococcus epidermidis (strain ATCC 35984 / DSM 28319 / BCRC 17069 / CCUG 31568 / BM 3577 / RP62A).